Here is a 1455-residue protein sequence, read N- to C-terminus: Cleavage and polyadenylation specificity factor subunit 1 (1455 aa).

It belongs to the CPSF1 family. As to quaternary structure, component of the cleavage and polyadenylation specificity factor (CPSF) complex, composed of at least Clp, Cpsf73, Cpsf100 and Cpsf160.

The protein resides in the nucleus. Its function is as follows. Component of the cleavage and polyadenylation specificity factor (CPSF) complex that plays a key role in pre-mRNA 3'-end formation, recognizing the AAUAAA signal sequence and interacting with poly(A) polymerase and other factors to bring about cleavage and poly(A) addition. This subunit is involved in the RNA recognition step of the polyadenylation reaction. This Drosophila melanogaster (Fruit fly) protein is Cleavage and polyadenylation specificity factor subunit 1 (Cpsf160).